The chain runs to 202 residues: Interleukin-17D (202 aa).

The first 15 residues, 1–15 (MLVAGFLLALPPSWA), serve as a signal peptide directing secretion. Residues 65-85 (QARNASCPAGGRPADRRFRPP) are disordered. N-linked (GlcNAc...) asparagine glycosylation is found at N68 and N181.

This sequence belongs to the IL-17 family. As to expression, expressed preferentially in adipose, skeletal muscle and CNS.

It is found in the secreted. Induces expression of IL6, CXCL8/IL8, and CSF2/GM-CSF from endothelial cells. The polypeptide is Interleukin-17D (IL17D) (Homo sapiens (Human)).